A 236-amino-acid chain; its full sequence is MSPPNQDAQEGRPDSPTAEVVDVRRGMFGVSGTGDTSGYGRLVRQVVLPGSSPRPYGGYFDDIVDRLAEALRHERVEFEDAVEKVVVYRDELTLHVRRDLLPRVAQRLRDEPELRFELCLGVSGVHYPHETGRELHAVYPLQSITHNRRLRLEVSAPDSDPHIPSLFAIYPTNDWHERETYDFFGIIFDGHPALTRIEMPDDWQGHPQRKDYPLGGIPVEYKGAQIPPPDERRGYN.

Residues 1-20 are disordered; it reads MSPPNQDAQEGRPDSPTAEV.

It belongs to the complex I 30 kDa subunit family. As to quaternary structure, NDH-1 is composed of 14 different subunits. Subunits NuoB, C, D, E, F, and G constitute the peripheral sector of the complex.

Its subcellular location is the cell membrane. It catalyses the reaction a quinone + NADH + 5 H(+)(in) = a quinol + NAD(+) + 4 H(+)(out). NDH-1 shuttles electrons from NADH, via FMN and iron-sulfur (Fe-S) centers, to quinones in the respiratory chain. The immediate electron acceptor for the enzyme in this species is believed to be a menaquinone. Couples the redox reaction to proton translocation (for every two electrons transferred, four hydrogen ions are translocated across the cytoplasmic membrane), and thus conserves the redox energy in a proton gradient. The chain is NADH-quinone oxidoreductase subunit C from Mycobacterium tuberculosis (strain ATCC 25177 / H37Ra).